The sequence spans 405 residues: Enoyl-[acyl-carrier-protein] reductase [NADH] (405 aa).

NAD(+) contacts are provided by residues 48 to 53 (GASSGY), 74 to 75 (FE), 111 to 112 (DA), and 140 to 141 (LA). Tyr226 serves as a coordination point for substrate. Tyr236 acts as the Proton donor in catalysis. NAD(+) contacts are provided by residues Lys245 and 274-276 (VVT).

The protein belongs to the TER reductase family. In terms of assembly, monomer.

It catalyses the reaction a 2,3-saturated acyl-[ACP] + NAD(+) = a (2E)-enoyl-[ACP] + NADH + H(+). It functions in the pathway lipid metabolism; fatty acid biosynthesis. Functionally, involved in the final reduction of the elongation cycle of fatty acid synthesis (FAS II). Catalyzes the reduction of a carbon-carbon double bond in an enoyl moiety that is covalently linked to an acyl carrier protein (ACP). The protein is Enoyl-[acyl-carrier-protein] reductase [NADH] of Xanthomonas oryzae pv. oryzae (strain PXO99A).